We begin with the raw amino-acid sequence, 559 residues long: Polypeptide N-acetylgalactosaminyltransferase 1 (559 aa).

Topologically, residues 1-8 are cytoplasmic; the sequence is MRKFAYCK. The chain crosses the membrane as a helical; Signal-anchor for type II membrane protein span at residues 9–28; the sequence is VVLATSLVWVLLDMFLLLYF. At 29 to 559 the chain is on the lumenal side; that stretch reads SECNKCEEKK…LRNVTLPEIF (531 aa). Residue Asn95 is glycosylated (N-linked (GlcNAc...) asparagine). Intrachain disulfides connect Cys106–Cys339, Cys330–Cys408, Cys442–Cys459, Cys482–Cys497, and Cys523–Cys540. A catalytic subdomain A region spans residues 115 to 225; it reads LPTTSVVIVF…VGWLEPLLAR (111 aa). Residues Asp156 and Arg186 each contribute to the substrate site. 2 residues coordinate Mn(2+): Asp209 and His211. Residues 285–347 are catalytic subdomain B; it reads PVRTPTMAGG…TCSHVGHVFR (63 aa). Trp316 serves as a coordination point for substrate. Mn(2+) is bound at residue His344. 2 residues coordinate substrate: Arg347 and Tyr352. The 123-residue stretch at 429-551 folds into the Ricin B-type lectin domain; sequence FSLGEIRNVE…GSRSQQWLLR (123 aa). Residue Asn552 is glycosylated (N-linked (GlcNAc...) asparagine).

This sequence belongs to the glycosyltransferase 2 family. GalNAc-T subfamily. The cofactor is Mn(2+). As to expression, heart, brain, spleen, liver, skeletal muscle and kidney.

The protein resides in the golgi apparatus. It is found in the golgi stack membrane. It localises to the secreted. It carries out the reaction L-seryl-[protein] + UDP-N-acetyl-alpha-D-galactosamine = a 3-O-[N-acetyl-alpha-D-galactosaminyl]-L-seryl-[protein] + UDP + H(+). The enzyme catalyses L-threonyl-[protein] + UDP-N-acetyl-alpha-D-galactosamine = a 3-O-[N-acetyl-alpha-D-galactosaminyl]-L-threonyl-[protein] + UDP + H(+). It functions in the pathway protein modification; protein glycosylation. Functionally, catalyzes the initial reaction in O-linked oligosaccharide biosynthesis, the transfer of an N-acetyl-D-galactosamine residue to a serine or threonine residue on the protein receptor. Has a broad spectrum of substrates such as apomucin-, MUC5AC-, MUC1- and MUC2-derived peptides. The sequence is that of Polypeptide N-acetylgalactosaminyltransferase 1 from Rattus norvegicus (Rat).